The chain runs to 337 residues: uncharacterized protein (337 aa).

Residues 248-276 (NELKAETTIQVLREQLRQEKKLKEQVLSL) are a coiled coil. The interval 285–337 (GGRGEEFGKPDETPSSASVGDDNFPSSTNHTFEARRRPSSLSSGGALKPSKIL) is disordered. The segment covering 287–296 (RGEEFGKPDE) has biased composition (basic and acidic residues). The span at 297–315 (TPSSASVGDDNFPSSTNHT) shows a compositional bias: polar residues.

This is an uncharacterized protein from Invertebrate iridescent virus 3 (IIV-3).